The chain runs to 264 residues: Transcription initiation factor TFIID subunit 9 (264 aa).

Lys5 carries the post-translational modification N6-acetyllysine. 4 positions are modified to phosphoserine: Ser149, Ser152, Ser155, and Ser158. The segment at 150–174 is disordered; sequence VGSVSSRPSTPTLGTPTPQAMSVST. The span at 151–174 shows a compositional bias: polar residues; it reads GSVSSRPSTPTLGTPTPQAMSVST. Phosphothreonine occurs at positions 159, 161, 164, and 178. Residues Ser181 and Ser196 each carry the phosphoserine modification. The disordered stretch occupies residues 233-264; the sequence is QNTANESANALKRKREEEDDDDDDDDDDYDNL. Residues 249–264 are compositionally biased toward acidic residues; sequence EEDDDDDDDDDDYDNL.

Belongs to the TAF9 family. Component of the TFIID basal transcription factor complex, composed of TATA-box-binding protein TBP, and a number of TBP-associated factors (TAFs), including TAF1, TAF2, TAF3, TAF4, TAF5, TAF6, TAF7, TAF8, TAF9, TAF10, TAF11, TAF12 and TAF13. Component of the TATA-binding protein-free TAF complex (TFTC), the PCAF histone acetylase complex and the STAGA transcription coactivator-HAT complex. The PCAF complex consists at least of TADA2L/ADA2, SUPT3H/SPT3, TADA3L/ADA3, TAF5L/PAF65-beta, TAF6L/PAF65-alpha, TAF10/TAFII30, TAF12/TAFII20, TAF9/TAFII31 and TRRAP. The STAGA transcription coactivator-HAT complex consists at least of SUPT3H, GCN5L2, SUPT7L, TAF5L, TAF6L, TADA3L, TAD1L, TAF10, TAF12, TRRAP and TAF9. Binds N-terminal domain of p53/TP53 which is essential for transcription. Component of some MLL1/MLL complex, at least composed of the core components KMT2A/MLL1, ASH2L, HCFC1/HCF1, WDR5 and RBBP5, as well as the facultative components BACC1, CHD8, E2F6, HSP70, INO80C, KANSL1, LAS1L, MAX, MCRS1, MGA, MYST1/MOF, PELP1, PHF20, PRP31, RING2, RUVB1/TIP49A, RUVB2/TIP49B, SENP3, TAF1, TAF4, TAF6, TAF7, TAF9 and TEX10. Binds TFIIB and the Herpes simplex virus activator VP16. Forms a heterodimer with TAF6 in a complex with the TAF4B-TAF12 heterodimer. Also interacts with TAF5. Binds directly DNA. Increased DNA binding when complexed with TAF6.

The protein resides in the nucleus. Its function is as follows. The TFIID basal transcription factor complex plays a major role in the initiation of RNA polymerase II (Pol II)-dependent transcription. TFIID recognizes and binds promoters with or without a TATA box via its subunit TBP, a TATA-box-binding protein, and promotes assembly of the pre-initiation complex (PIC). The TFIID complex consists of TBP and TBP-associated factors (TAFs), including TAF1, TAF2, TAF3, TAF4, TAF5, TAF6, TAF7, TAF8, TAF9, TAF10, TAF11, TAF12 and TAF13. TAF9 is also a component of the TBP-free TAFII complex (TFTC), the PCAF histone acetylase complex and the STAGA transcription coactivator-HAT complex. TAF9 and its paralog TAF9B are involved in transcriptional activation as well as repression of distinct but overlapping sets of genes. Essential for cell viability. May have a role in gene regulation associated with apoptosis. The sequence is that of Transcription initiation factor TFIID subunit 9 from Rattus norvegicus (Rat).